Reading from the N-terminus, the 293-residue chain is N(1)-aminopropylagmatine ureohydrolase (293 aa).

Residues His105, Asp128, His130, Asp132, Asp210, and Asp212 each contribute to the Mn(2+) site.

This sequence belongs to the arginase family. It depends on Mn(2+) as a cofactor.

It catalyses the reaction N(1)-(3-aminopropyl)agmatine + H2O = urea + spermidine. The protein operates within amine and polyamine biosynthesis; spermidine biosynthesis. Involved in the biosynthesis of polyamines which are thought to support the growth of thermophilic microorganisms under high-temperature conditions. It seems that long-chain and branched-chain of polyamines effectively stabilize DNA and RNA, respectively. Catalyzes the decarboxylation of N1-(3-aminopropyl)agmatine to yield spermidine and urea. Does not act on agmatine. The sequence is that of N(1)-aminopropylagmatine ureohydrolase from Thermus thermophilus (strain ATCC BAA-163 / DSM 7039 / HB27).